The following is a 176-amino-acid chain: Nucleoside triphosphate/diphosphate phosphatase (176 aa).

Catalysis depends on Arg-23, which acts as the Proton donor. Mg(2+) contacts are provided by Asn-87, Asp-103, Asp-105, Asp-107, Asp-120, and Glu-123.

The protein belongs to the Ntdp family. It depends on Mg(2+) as a cofactor.

The enzyme catalyses a ribonucleoside 5'-triphosphate + H2O = a ribonucleoside 5'-diphosphate + phosphate + H(+). The catalysed reaction is a ribonucleoside 5'-diphosphate + H2O = a ribonucleoside 5'-phosphate + phosphate + H(+). Has nucleoside phosphatase activity towards nucleoside triphosphates and nucleoside diphosphates. This chain is Nucleoside triphosphate/diphosphate phosphatase, found in Bacillus anthracis (strain A0248).